The chain runs to 170 residues: Translationally-controlled tumor protein homolog (170 aa).

One can recognise a TCTP domain in the interval 1-170 (MLIYNDILNG…WKHGLKETKV (170 aa)).

Belongs to the TCTP family.

Its subcellular location is the cytoplasm. The protein resides in the cytoskeleton. Functionally, involved in protein synthesis. Involved in microtubule stabilization. This chain is Translationally-controlled tumor protein homolog, found in Gibberella zeae (strain ATCC MYA-4620 / CBS 123657 / FGSC 9075 / NRRL 31084 / PH-1) (Wheat head blight fungus).